We begin with the raw amino-acid sequence, 1610 residues long: Adenylate cyclase type 10 (1610 aa).

2 Guanylate cyclase domains span residues 42–179 (VLMF…RLAQ) and 293–418 (TIVF…ARMM). Aspartate 47 and isoleucine 48 together coordinate Mg(2+). Residue 47–52 (DISGFT) coordinates ATP. Residue lysine 95 participates in hydrogencarbonate binding. Aspartate 99 provides a ligand contact to Mg(2+). ATP contacts are provided by aspartate 99 and lysine 144. Hydrogencarbonate contacts are provided by valine 167, arginine 176, and methionine 337. ATP is bound by residues valine 406 and 412–416 (NIAAR).

This sequence belongs to the adenylyl cyclase class-4/guanylyl cyclase family. Requires Mg(2+) as cofactor. Mn(2+) serves as cofactor.

It localises to the cell membrane. The protein resides in the cytoplasm. It is found in the cytoskeleton. The protein localises to the perinuclear region. Its subcellular location is the nucleus. It localises to the cell projection. The protein resides in the cilium. The catalysed reaction is ATP = 3',5'-cyclic AMP + diphosphate. With respect to regulation, activated by manganese or magnesium ions. In the presence of magnesium ions, the enzyme is activated by bicarbonate. Calcium mildly increases the enzyme activity, also in the presence of magnesium ions. Catalyzes the formation of the signaling molecule cAMP. May function as sensor that mediates responses to changes in cellular bicarbonate and CO(2) levels. Has a critical role in mammalian spermatogenesis by producing the cAMP which regulates cAMP-responsive nuclear factors indispensable for sperm maturation in the epididymis. Induces capacitation, the maturational process that sperm undergo prior to fertilization. Involved in ciliary beat regulation. This chain is Adenylate cyclase type 10 (ADCY10), found in Oryctolagus cuniculus (Rabbit).